The sequence spans 65 residues: METVTVLRKKGKTYLIVSVNGFLTVTDCKSLNKLQKELLRQAYRKTKNEEEKALINVCLQSRLNR.

This is an uncharacterized protein from Acidianus filamentous virus 1 (isolate United States/Yellowstone) (AFV-1).